The chain runs to 223 residues: AMSH-like ubiquitin thioesterase 2 (223 aa).

In terms of domain architecture, MPN spans 49-177 (VHISERLLED…YGIFKLTDPG (129 aa)). Residues His-127, His-129, Asp-140, His-142, Cys-185, His-191, and His-193 each contribute to the Zn(2+) site. The short motif at 127–140 (HTHPSQGCFMSSVD) is the JAMM motif element.

It belongs to the peptidase M67C family. It depends on Zn(2+) as a cofactor.

Functionally, zinc metalloprotease that cleaves 'Lys-48'- and 'Lys-63'-linked polyubiquitin chains. This chain is AMSH-like ubiquitin thioesterase 2 (AMSH2), found in Arabidopsis thaliana (Mouse-ear cress).